A 287-amino-acid chain; its full sequence is uncharacterized protein (287 aa).

The disordered stretch occupies residues 1-23 (MTVSDSPAQRQTPPQTPGGTAPR). Positions 7-23 (PAQRQTPPQTPGGTAPR) are enriched in low complexity. Residues Asp31, Asp33, and Asp204 each contribute to the Mg(2+) site.

This sequence belongs to the HAD-like hydrolase superfamily. SerB family.

This is an uncharacterized protein from Mycobacterium tuberculosis (strain CDC 1551 / Oshkosh).